The primary structure comprises 768 residues: Eukaryotic elongation factor 2 kinase (768 aa).

The segment covering 1 to 17 (MTIDTTNESDNSPTNSP) has biased composition (polar residues). The segment at 1–21 (MTIDTTNESDNSPTNSPGLEA) is disordered. The Alpha-type protein kinase domain maps to 102-309 (RYSAIRKQWT…ICETMDLSNF (208 aa)). Residue 279–284 (GDGNLG) participates in ATP binding. Residues 402–411 (SEDEEDEEED) show a composition bias toward acidic residues. The interval 402–446 (SEDEEDEEEDYPRSEKSGNSQKSRRSRMSISTRSSGDESASRPRK) is disordered.

It belongs to the protein kinase superfamily. Alpha-type protein kinase family. As to quaternary structure, monomer or homodimer. Interacts with cmd-1 in the presence of Ca(2+).

It carries out the reaction [translation elongation factor 2] + ATP = [translation elongation factor 2]-phosphate + ADP + H(+). With respect to regulation, calcium(2+)/calmodulin dependent activity. Undergoes calcium/calmodulin-dependent intramolecular autophosphorylation, and this results in it becoming partially calcium/calmodulin-independent. Functionally, phosphorylates elongation factor-2 (eEF-2) at two threonine residues that are conserved in all eukaryotes and are located within a GTP-binding domain. Calcium(2+)/calmodulin dependent activity. Inactivates eEF-2 by catalyzing its phosphorylation. eEF-2 catalyzes the movement of the ribosome along mRNA during translation in eukaryotic cells. In Caenorhabditis elegans, this protein is Eukaryotic elongation factor 2 kinase (efk-1).